We begin with the raw amino-acid sequence, 474 residues long: Phenylalanine--tRNA ligase alpha subunit (474 aa).

L-phenylalanine-binding positions include Thr317, 356 to 358, and Tyr396; that span reads QLE. Residue Glu398 coordinates Mg(2+). Phe421 serves as a coordination point for L-phenylalanine.

This sequence belongs to the class-II aminoacyl-tRNA synthetase family. Phe-tRNA synthetase alpha subunit type 2 subfamily. As to quaternary structure, tetramer of two alpha and two beta subunits. Requires Mg(2+) as cofactor.

The protein resides in the cytoplasm. It carries out the reaction tRNA(Phe) + L-phenylalanine + ATP = L-phenylalanyl-tRNA(Phe) + AMP + diphosphate + H(+). This chain is Phenylalanine--tRNA ligase alpha subunit, found in Methanocorpusculum labreanum (strain ATCC 43576 / DSM 4855 / Z).